A 107-amino-acid chain; its full sequence is MPSTCLVTVETQDPQVIPCTLSSPSFVLMAVISESLSISQSNPQSSIISLIESAVTSLSYVTWHSLVTKLISHFVTPFKARNCVLIVLVQALHVIPCTASITSLISF.

The next 3 membrane-spanning stretches (helical) occupy residues 16-36 (VIPC…SESL), 47-67 (IISL…HSLV), and 85-105 (LIVL…TSLI).

The protein resides in the membrane. This is an uncharacterized protein from Saccharomyces cerevisiae (strain ATCC 204508 / S288c) (Baker's yeast).